Consider the following 346-residue polypeptide: Ribosomal RNA small subunit methyltransferase H (346 aa).

S-adenosyl-L-methionine is bound by residues 47–49 (GGY), Asp-65, Phe-92, Asp-113, and Gln-120. Positions 270–279 (RGEAPSRRLP) are enriched in basic and acidic residues. A disordered region spans residues 270–346 (RGEAPSRRLP…ALPQRAAKGR (77 aa)).

It belongs to the methyltransferase superfamily. RsmH family.

The protein resides in the cytoplasm. The enzyme catalyses cytidine(1402) in 16S rRNA + S-adenosyl-L-methionine = N(4)-methylcytidine(1402) in 16S rRNA + S-adenosyl-L-homocysteine + H(+). Specifically methylates the N4 position of cytidine in position 1402 (C1402) of 16S rRNA. The chain is Ribosomal RNA small subunit methyltransferase H from Methylocella silvestris (strain DSM 15510 / CIP 108128 / LMG 27833 / NCIMB 13906 / BL2).